Reading from the N-terminus, the 179-residue chain is Transthyretin-like protein 46 (179 aa).

A signal peptide spans 1 to 17 (MNKLFVLLIALLGLTAA). The disordered stretch occupies residues 144 to 179 (RRGGFNADYMDPDNSEKDQSKSSEESEDKEKTVETF). Residues 157-179 (NSEKDQSKSSEESEDKEKTVETF) are compositionally biased toward basic and acidic residues.

This sequence belongs to the nematode transthyretin-like family.

The protein localises to the secreted. This is Transthyretin-like protein 46 (ttr-46) from Caenorhabditis elegans.